The following is a 37-amino-acid chain: Large ribosomal subunit protein bL36 (37 aa).

The protein belongs to the bacterial ribosomal protein bL36 family.

This is Large ribosomal subunit protein bL36 from Alkalilimnicola ehrlichii (strain ATCC BAA-1101 / DSM 17681 / MLHE-1).